The chain runs to 187 residues: MSLFKDDIQLNEHQVAWYSKDWTAVQSAADSFKEKAENEFFEIIGAINNKTKCSIAQKDYSKFMVENALSQFPECMPAVYAMNLIGSGLSDEAHFNYLMAAVPRGKRYGKWAKLVEDSTEVLIIKLLAKRYQVNTNDAINYKSILTKNGKLPLVLKELKGLVTDDFLKEVTKNVKEQKQLKKLALEW.

It belongs to the Tevenvirinae sliding-clamp-loader small subunit family. As to quaternary structure, the sliding-clamp-loader consists of 4 large subunits and 1 small subunit. Interacts with the sliding clamp; this interaction allows the sliding-clamp-loader to open the sliding clamp. Part of the replicase complex that includes the DNA polymerase, the polymerase clamp, the clamp loader complex, the single-stranded DNA binding protein, the primase, the helicase and the helicase assembly factor.

Forms the sliding-clamp-loader together with the small subunit. The clamp loader holds the clamp in an open conformation and places it onto the DNA. In Escherichia coli (Bacteriophage T4), this protein is Sliding-clamp-loader small subunit (62).